A 668-amino-acid polypeptide reads, in one-letter code: Myb-like protein W (668 aa).

Disordered regions lie at residues 57–124 (LDQF…NESV), 246–357 (EKEK…EEEV), 403–432 (KPKSKLKSSSKPGIPTSPITMKTNPHTDKG), 497–546 (YTNT…NKER), 561–583 (SMGRFSAKPPPIKTTTTTTTTTS), and 631–668 (QCEERKKKEDRDVDEDGEDDYYFGGDNSKNGDDDDEII). Low complexity predominate over residues 69–121 (NNNNNNNSNNNNNNNNNNNNNNNNNNNNNNNNNNNNNNNNNNYNNYNNNNNNN). The span at 246 to 268 (EKEKRKKEREEREEREKQEKQEQ) shows a compositional bias: basic and acidic residues. Residues 293-307 (NNKDNNHNGYYYYYD) show a composition bias toward low complexity. The segment covering 308–318 (NDNDNYNDGDD) has biased composition (acidic residues). Residues 319–335 (EKEKEKEKEKEKEKENE) are compositionally biased toward basic and acidic residues. The 55-residue stretch at 344-398 (TSMVNSEEWTEEEVNKMNEIRGKLSTADYNYWDKVSAHVKSKTAEQCQRKYNSRF) folds into the Myb-like domain. Positions 501–542 (NNNNNNNNNNNNNNNNNNNNNNNNNNNNNNNNNNNNNNNNNN) are enriched in low complexity. The segment covering 632–641 (CEERKKKEDR) has biased composition (basic and acidic residues). A compositionally biased stretch (acidic residues) spans 642-651 (DVDEDGEDDY).

In Dictyostelium discoideum (Social amoeba), this protein is Myb-like protein W (mybW).